Consider the following 83-residue polypeptide: Small ribosomal subunit protein bS20 (83 aa).

Residues 60 to 83 are disordered; that stretch reads ASKGLIHKNKASRDKSRLAAKLAN.

Belongs to the bacterial ribosomal protein bS20 family.

Functionally, binds directly to 16S ribosomal RNA. This is Small ribosomal subunit protein bS20 from Streptococcus thermophilus (strain CNRZ 1066).